We begin with the raw amino-acid sequence, 134 residues long: Lymphocyte antigen 6F (134 aa).

The N-terminal stretch at 1 to 26 (MDSCHTTKSCVLILLVVLLCAERAQG) is a signal peptide. The 93-residue stretch at 27-119 (LECYNCLGVS…TGGSTWTMTR (93 aa)) folds into the UPAR/Ly6 domain. Intrachain disulfides connect C29/C53, C32/C41, C46/C74, C78/C98, and C99/C104. G112 is lipidated: GPI-anchor amidated glycine. Residues 113–134 (STWTMTRVLLLNLGSVFLQTLL) constitute a propeptide, removed in mature form.

The protein resides in the cell membrane. The sequence is that of Lymphocyte antigen 6F (Ly6f) from Mus musculus (Mouse).